We begin with the raw amino-acid sequence, 454 residues long: Death-associated protein kinase 3 (454 aa).

Positions 13-275 (YEMGEELGSG…IAQSLEHSWI (263 aa)) constitute a Protein kinase domain. Residues 19 to 27 (LGSGQFAIV) and Lys-42 contribute to the ATP site. Ser-50 carries the phosphoserine; by autocatalysis modification. Pyridone 6 contacts are provided by Glu-94 and Val-96. The active-site Proton acceptor is Asp-139. Residues 161–204 (DFGIAHKIEAGNEFKNIFGTPEFVAPEIVNYEPLGLEADMWSIG) are activation segment. Thr-180 and Thr-225 each carry phosphothreonine. Thr-265 carries the phosphothreonine; by autocatalysis and ROCK1 modification. Position 299 is a phosphothreonine; by autocatalysis, DAPK1 and ROCK1 (Thr-299). Thr-306 carries the phosphothreonine; by autocatalysis modification. Position 309 is a phosphoserine; by DAPK1 (Ser-309). Residue Ser-311 is modified to Phosphoserine; by autocatalysis and DAPK1. Phosphoserine; by DAPK1 is present on residues Ser-312, Ser-318, and Ser-326. Residues 427 to 441 (VASEMRFVQDLVRAL) are leucine-zipper.

Belongs to the protein kinase superfamily. CAMK Ser/Thr protein kinase family. DAP kinase subfamily. As to quaternary structure, homooligomer in its kinase-active form (homotrimers and homodimers are reported); monomeric in its kinase-inactive form. Homodimerization is required for activation segment autophosphorylation. Isoform 1 and isoform 2 interact with myosin and PPP1R12A; interaction of isoform 1 with PPP1R12A is inhibited by RhoA dominant negative form. Interacts with NLK, DAXX, STAT3, RHOD (GTP-bound form) and TCP10L. Interacts with PAWR; the interaction is reported conflictingly: according to PubMed:17953487 does not interact with PAWR. Interacts with ULK1; may be a substrate of ULK1. Interacts with LUZP1; the interaction is likely to occur throughout the cell cycle and reduces the LUZP1-mediated suppression of MYL9 phosphorylation. Mg(2+) is required as a cofactor. Post-translationally, the phosphorylation status is critical for kinase activity, oligomerization and intracellular localization. Phosphorylation at Thr-180, Thr-225 and Thr-265 is essential for activity. The phosphorylated form is localized in the cytoplasm promoted by phosphorylation at Thr-299; nuclear translocation or retention is maximal when it is not phosphorylated. Phosphorylation increases the trimeric form, and its dephosphorylation favors a kinase-inactive monomeric form. Both isoform 1 and isoform 2 can undergo autophosphorylation. Widely expressed. Isoform 1 and isoform 2 are expressed in the bladder smooth muscle.

It localises to the nucleus. It is found in the PML body. Its subcellular location is the cytoplasm. The protein localises to the cytoskeleton. The protein resides in the microtubule organizing center. It localises to the centrosome. It is found in the chromosome. Its subcellular location is the centromere. The protein localises to the spindle. The protein resides in the midbody. It catalyses the reaction L-seryl-[protein] + ATP = O-phospho-L-seryl-[protein] + ADP + H(+). The enzyme catalyses L-threonyl-[protein] + ATP = O-phospho-L-threonyl-[protein] + ADP + H(+). Its activity is regulated as follows. A sequential activation is proposed: autophosphorylation at consensus sites is leading to dimerization of the catalytic domain stabilized by phosphorylation at Ser-50 and activation segment exchange (producing an active confirmation of both kinase modules in trans) followed by phosphorylation at Thr-180 in the activation segment and at other regulatory sites. Phosphorylation at Thr-180, Thr-225 and Thr-265 is essential for activity. Oligomerization is required for full enzymatic activity. Inhibited by pyridone-6 (K00225), a potent, ATP-competitive inhibitor. Its function is as follows. Serine/threonine kinase which is involved in the regulation of apoptosis, autophagy, transcription, translation and actin cytoskeleton reorganization. Involved in the regulation of smooth muscle contraction. Regulates both type I (caspase-dependent) apoptotic and type II (caspase-independent) autophagic cell deaths signal, depending on the cellular setting. Involved in regulation of starvation-induced autophagy. Regulates myosin phosphorylation in both smooth muscle and non-muscle cells. In smooth muscle, regulates myosin either directly by phosphorylating MYL12B and MYL9 or through inhibition of smooth muscle myosin phosphatase (SMPP1M) via phosphorylation of PPP1R12A; the inhibition of SMPP1M functions to enhance muscle responsiveness to Ca(2+) and promote a contractile state. Phosphorylates MYL12B in non-muscle cells leading to reorganization of actin cytoskeleton. Isoform 2 can phosphorylate myosin, PPP1R12A and MYL12B. Overexpression leads to condensation of actin stress fibers into thick bundles. Involved in actin filament focal adhesion dynamics. The function in both reorganization of actin cytoskeleton and focal adhesion dissolution is modulated by RhoD. Positively regulates canonical Wnt/beta-catenin signaling through interaction with NLK and TCF7L2. Phosphorylates RPL13A on 'Ser-77' upon interferon-gamma activation which is causing RPL13A release from the ribosome, RPL13A association with the GAIT complex and its subsequent involvement in transcript-selective translation inhibition. Enhances transcription from AR-responsive promoters in a hormone- and kinase-dependent manner. Involved in regulation of cell cycle progression and cell proliferation. May be a tumor suppressor. The protein is Death-associated protein kinase 3 (DAPK3) of Homo sapiens (Human).